The chain runs to 418 residues: Imidazolonepropionase (418 aa).

The Fe(3+) site is built by His-80 and His-82. His-80 and His-82 together coordinate Zn(2+). 4-imidazolone-5-propanoate contacts are provided by Arg-89, Tyr-152, and His-185. Tyr-152 contacts N-formimidoyl-L-glutamate. His-250 is a Fe(3+) binding site. Residue His-250 coordinates Zn(2+). Gln-253 contributes to the 4-imidazolone-5-propanoate binding site. Fe(3+) is bound at residue Asp-325. Asp-325 lines the Zn(2+) pocket. 2 residues coordinate N-formimidoyl-L-glutamate: Asn-327 and Gly-329. Residue Ser-330 participates in 4-imidazolone-5-propanoate binding.

Belongs to the metallo-dependent hydrolases superfamily. HutI family. The cofactor is Zn(2+). Requires Fe(3+) as cofactor.

Its subcellular location is the cytoplasm. It catalyses the reaction 4-imidazolone-5-propanoate + H2O = N-formimidoyl-L-glutamate. Its pathway is amino-acid degradation; L-histidine degradation into L-glutamate; N-formimidoyl-L-glutamate from L-histidine: step 3/3. Its function is as follows. Catalyzes the hydrolytic cleavage of the carbon-nitrogen bond in imidazolone-5-propanoate to yield N-formimidoyl-L-glutamate. It is the third step in the universal histidine degradation pathway. The chain is Imidazolonepropionase from Solibacter usitatus (strain Ellin6076).